Here is a 418-residue protein sequence, read N- to C-terminus: Gamma-glutamyl phosphate reductase (418 aa).

This sequence belongs to the gamma-glutamyl phosphate reductase family.

The protein resides in the cytoplasm. It carries out the reaction L-glutamate 5-semialdehyde + phosphate + NADP(+) = L-glutamyl 5-phosphate + NADPH + H(+). It participates in amino-acid biosynthesis; L-proline biosynthesis; L-glutamate 5-semialdehyde from L-glutamate: step 2/2. In terms of biological role, catalyzes the NADPH-dependent reduction of L-glutamate 5-phosphate into L-glutamate 5-semialdehyde and phosphate. The product spontaneously undergoes cyclization to form 1-pyrroline-5-carboxylate. The chain is Gamma-glutamyl phosphate reductase from Geobacter metallireducens (strain ATCC 53774 / DSM 7210 / GS-15).